We begin with the raw amino-acid sequence, 81 residues long: Styelin-E (81 aa).

The N-terminal stretch at 1 to 22 is a signal peptide; the sequence is MQMKATILIVLVALFMIQQSEA. Trp24 bears the 6'-bromotryptophan mark. Arg26 carries the post-translational modification 3,4-dihydroxyarginine. Lys27, Lys30, and Lys34 each carry 4,5-dihydroxylysine. 3',4'-dihydroxyphenylalanine is present on residues Tyr36 and Tyr37. Position 38 is a 4,5-dihydroxylysine (Lys38). Lys40 is modified (5-hydroxylysine). 2 positions are modified to 3',4'-dihydroxyphenylalanine: Tyr41 and Tyr42. Lys44 bears the 5-hydroxylysine mark. At Leu54 the chain carries Leucine amide. Positions 56–81 are cleaved as a propeptide — removed in mature form; that stretch reads DMTDEEFQDFMKEVEQAREEELQSRQ.

In terms of processing, contains L-DOPA (3',4'-dihydroxyphenylalanine). In terms of tissue distribution, hemocytes and pharyngeal tissues.

It localises to the secreted. Its function is as follows. Bactericidal against several Gram-positive and Gram-negative bacteria. The chain is Styelin-E from Styela clava (Sea squirt).